The primary structure comprises 746 residues: NAD(P)H-quinone oxidoreductase subunit 5, chloroplastic (746 aa).

Helical transmembrane passes span Trp-9 to Phe-29, Trp-40 to Ile-60, Ile-89 to Ile-109, Tyr-121 to Thr-140, Val-147 to Thr-167, Gly-185 to Phe-205, Asn-219 to Ala-239, Thr-258 to Ala-278, Leu-280 to Ile-300, Leu-327 to Ile-347, Ala-354 to Ser-374, Met-396 to Ser-416, Trp-425 to Tyr-445, Leu-552 to Phe-572, Phe-606 to Phe-626, and Ser-726 to Pro-746.

This sequence belongs to the complex I subunit 5 family. NDH is composed of at least 16 different subunits, 5 of which are encoded in the nucleus.

The protein localises to the plastid. It localises to the chloroplast thylakoid membrane. The enzyme catalyses a plastoquinone + NADH + (n+1) H(+)(in) = a plastoquinol + NAD(+) + n H(+)(out). The catalysed reaction is a plastoquinone + NADPH + (n+1) H(+)(in) = a plastoquinol + NADP(+) + n H(+)(out). Its function is as follows. NDH shuttles electrons from NAD(P)H:plastoquinone, via FMN and iron-sulfur (Fe-S) centers, to quinones in the photosynthetic chain and possibly in a chloroplast respiratory chain. The immediate electron acceptor for the enzyme in this species is believed to be plastoquinone. Couples the redox reaction to proton translocation, and thus conserves the redox energy in a proton gradient. This chain is NAD(P)H-quinone oxidoreductase subunit 5, chloroplastic (ndhF), found in Vicia faba (Broad bean).